We begin with the raw amino-acid sequence, 81 residues long: Mipartoxin-1 (81 aa).

Positions 1–21 (MKTLLLTLVVVTIVCLDLGNS) are cleaved as a signal peptide. Intrachain disulfides connect C24–C42, C35–C61, C65–C73, and C74–C79.

The protein belongs to the three-finger toxin family. Short-chain subfamily. Contains 4 disulfide bonds. Expressed by the venom gland.

Its subcellular location is the secreted. In terms of biological role, snake venom neurotoxin that blocks neuromuscular transmission on both avian and mouse nerve-muscle preparations, presenting a postsynaptic action through the nicotinic acetylcholine receptor (nAChR). Reversibly inhibits twitches in mouse phrenic nerve diaphragm and irreversibly in chick biventer cervicis muscle. Has no cytotoxic activity towards C2C12 cells up to 180 ug/ml. This chain is Mipartoxin-1, found in Micrurus mipartitus (Red-tailed coral snake).